The sequence spans 400 residues: MTERVVLAYSGGLDTSVAIGWIGAETGAEVIALAVDVGQGGEDLEAIRQRAFTCGAVESIVVDAREEFAASFVAPAIRANALYMDRYPLISSLSRPIIVKHLVEAAKQHGADAISHGCTGKGNDQVRFEVGVMALAPGLRVLAPVRDSGMTRDKAIAFAEERGLPIDVSKKSPYSIDQNLWGRTAECGVLEDPWAQPPEDVFVYTADPTVSRPSDEVTISFTDGLPTGLDGRALSLVDLVAELNTRAGAQGVGRIDMIEDRLVGIKSREIYECPAAITLLTAHRDLEDLTLERDVARFKRGIDQRWGEIVYDGLWFSPLRAALDAFVDSASVGVTGDVRIRLAGGVAQVVGRRSPGSLYDHALATYDAGDQFDQTDARGFIELWGLPTKVWAAREQRLNP.

8–16 lines the ATP pocket; that stretch reads AYSGGLDTS. L-citrulline is bound by residues tyrosine 87 and serine 92. Glycine 117 provides a ligand contact to ATP. L-aspartate contacts are provided by threonine 119, asparagine 123, and aspartate 124. Asparagine 123 is an L-citrulline binding site. Residues arginine 127, serine 175, glutamate 259, and tyrosine 271 each coordinate L-citrulline.

Belongs to the argininosuccinate synthase family. Type 1 subfamily. In terms of assembly, homotetramer.

The protein resides in the cytoplasm. The catalysed reaction is L-citrulline + L-aspartate + ATP = 2-(N(omega)-L-arginino)succinate + AMP + diphosphate + H(+). It participates in amino-acid biosynthesis; L-arginine biosynthesis; L-arginine from L-ornithine and carbamoyl phosphate: step 2/3. In Parafrankia sp. (strain EAN1pec), this protein is Argininosuccinate synthase.